Consider the following 88-residue polypeptide: ATP synthase subunit c 2 (88 aa).

A run of 2 helical transmembrane segments spans residues 4–24 (FSWV…GTGI) and 53–73 (IGLA…MIIL).

This sequence belongs to the ATPase C chain family. In terms of assembly, F-type ATPases have 2 components, F(1) - the catalytic core - and F(0) - the membrane proton channel. F(1) has five subunits: alpha(3), beta(3), gamma(1), delta(1), epsilon(1). F(0) has three main subunits: a(1), b(2) and c(10-14). The alpha and beta chains form an alternating ring which encloses part of the gamma chain. F(1) is attached to F(0) by a central stalk formed by the gamma and epsilon chains, while a peripheral stalk is formed by the delta and b chains.

The protein localises to the cell inner membrane. Functionally, f(1)F(0) ATP synthase produces ATP from ADP in the presence of a proton or sodium gradient. F-type ATPases consist of two structural domains, F(1) containing the extramembraneous catalytic core and F(0) containing the membrane proton channel, linked together by a central stalk and a peripheral stalk. During catalysis, ATP synthesis in the catalytic domain of F(1) is coupled via a rotary mechanism of the central stalk subunits to proton translocation. In terms of biological role, key component of the F(0) channel; it plays a direct role in translocation across the membrane. A homomeric c-ring of between 10-14 subunits forms the central stalk rotor element with the F(1) delta and epsilon subunits. The chain is ATP synthase subunit c 2 from Syntrophotalea carbinolica (strain DSM 2380 / NBRC 103641 / GraBd1) (Pelobacter carbinolicus).